A 218-amino-acid chain; its full sequence is Probable transaldolase (218 aa).

The active-site Schiff-base intermediate with substrate is the K83.

Belongs to the transaldolase family. Type 3B subfamily.

Its subcellular location is the cytoplasm. It catalyses the reaction D-sedoheptulose 7-phosphate + D-glyceraldehyde 3-phosphate = D-erythrose 4-phosphate + beta-D-fructose 6-phosphate. It functions in the pathway carbohydrate degradation; pentose phosphate pathway; D-glyceraldehyde 3-phosphate and beta-D-fructose 6-phosphate from D-ribose 5-phosphate and D-xylulose 5-phosphate (non-oxidative stage): step 2/3. Functionally, transaldolase is important for the balance of metabolites in the pentose-phosphate pathway. The polypeptide is Probable transaldolase (tal) (Mesorhizobium japonicum (strain LMG 29417 / CECT 9101 / MAFF 303099) (Mesorhizobium loti (strain MAFF 303099))).